Here is a 572-residue protein sequence, read N- to C-terminus: Proline--tRNA ligase (572 aa).

Belongs to the class-II aminoacyl-tRNA synthetase family. ProS type 1 subfamily. Homodimer.

The protein resides in the cytoplasm. The enzyme catalyses tRNA(Pro) + L-proline + ATP = L-prolyl-tRNA(Pro) + AMP + diphosphate. In terms of biological role, catalyzes the attachment of proline to tRNA(Pro) in a two-step reaction: proline is first activated by ATP to form Pro-AMP and then transferred to the acceptor end of tRNA(Pro). As ProRS can inadvertently accommodate and process non-cognate amino acids such as alanine and cysteine, to avoid such errors it has two additional distinct editing activities against alanine. One activity is designated as 'pretransfer' editing and involves the tRNA(Pro)-independent hydrolysis of activated Ala-AMP. The other activity is designated 'posttransfer' editing and involves deacylation of mischarged Ala-tRNA(Pro). The misacylated Cys-tRNA(Pro) is not edited by ProRS. In Klebsiella pneumoniae (strain 342), this protein is Proline--tRNA ligase.